The primary structure comprises 201 residues: Potassium-transporting ATPase KdpC subunit (201 aa).

Residues 7-29 (PALVLLTALTAITGLAYPLAMTG) traverse the membrane as a helical segment.

Belongs to the KdpC family. As to quaternary structure, the system is composed of three essential subunits: KdpA, KdpB and KdpC.

It is found in the cell inner membrane. Part of the high-affinity ATP-driven potassium transport (or Kdp) system, which catalyzes the hydrolysis of ATP coupled with the electrogenic transport of potassium into the cytoplasm. This subunit acts as a catalytic chaperone that increases the ATP-binding affinity of the ATP-hydrolyzing subunit KdpB by the formation of a transient KdpB/KdpC/ATP ternary complex. The chain is Potassium-transporting ATPase KdpC subunit from Methylobacterium radiotolerans (strain ATCC 27329 / DSM 1819 / JCM 2831 / NBRC 15690 / NCIMB 10815 / 0-1).